The chain runs to 772 residues: Probable adenosine deaminase (772 aa).

Zn(2+)-binding residues include H22 and H24. Positions 24, 26, and 180 each coordinate substrate. Position 207 (H207) interacts with Zn(2+). The active-site Proton donor is the E210. D288 contributes to the Zn(2+) binding site.

The protein belongs to the metallo-dependent hydrolases superfamily. Adenosine and AMP deaminases family. Zn(2+) is required as a cofactor.

It carries out the reaction adenosine + H2O + H(+) = inosine + NH4(+). Its function is as follows. Catalyzes the hydrolytic deamination of adenosine. Plays an important role in purine metabolism and in adenosine homeostasis, and may thereby contribute to cellular signaling events. This is Probable adenosine deaminase (ada) from Dictyostelium discoideum (Social amoeba).